We begin with the raw amino-acid sequence, 1170 residues long: DNA excision repair protein ERCC-5 (1170 aa).

The segment at 1 to 78 is N-domain; it reads MGVQGLWKLL…RIRPIFVFDG (78 aa). Lysine 8 carries the N6-acetyllysine modification. Aspartate 30 is a binding site for Mg(2+). A DNA-binding; may bind to the undamaged single-strand DNA of the DNA repair bubble region spans residues 31–67; that stretch reads ISIWLNQALKGVRDSHGNVIENAHLLTLFHRLCKLLF. Aspartate 77 lines the Mg(2+) pocket. Residues 79–784 are spacer region; it reads DAPLLKKQTL…LRLFGVPYIQ (706 aa). Disordered regions lie at residues 304–479, 520–587, and 600–701; these read DSES…RCDT, HVSG…PKAC, and LENA…ECLL. The segment covering 306-323 has biased composition (low complexity); the sequence is ESLPSSSNVHSVSSNLKS. Composition is skewed to basic and acidic residues over residues 324–336 and 363–373; these read SPHEKVKPEREPE and SREGRQSKERN. Phosphoserine is present on serine 384. The segment covering 455–474 has biased composition (polar residues); it reads TSGSSANGQTDSAHSFTTAS. Residues 539 to 551 are compositionally biased toward basic and acidic residues; sequence THSDQGIDIHPED. The segment covering 659-676 has biased composition (polar residues); the sequence is SVVSNSELQTESSEASTH. The span at 677–698 shows a compositional bias: basic and acidic residues; the sequence is LSEKDAEEPRETLEEGTSRDTE. Phosphoserine is present on residues serine 704 and serine 705. Residues 785 to 880 form an I-domain region; sequence APMEAEAQCA…VTAMEILNEF (96 aa). Residues glutamate 788, glutamate 790, aspartate 809, and aspartate 811 each contribute to the Mg(2+) site. A DNA-binding; may bind to the undamaged single-strand DNA of the DNA repair bubble region spans residues 819–835; it reads HVYKNFFNKNKFVEYYQ. Positions 847–879 are DNA-binding; H2TH (helix-2turn-helix) motif which binds double-stranded DNA; that stretch reads RNKLINLAYLLGSDYTEGIPTVGCVTAMEILNE. Aspartate 860 serves as a coordination point for Mg(2+). Residues 911 to 917 form a DNA-binding; may bind double-stranded DNA region; that stretch reads TKVKKKL. The tract at residues 980 to 1008 is interaction with PCNA; it reads LKHLNAHQTQLRIDSFFRLAQQEKQDAKL. The interaction with ERCC6/CSB stretch occupies residues 1010–1170; sequence KSHRLNRAVT…KSMKRRKKKT (161 aa). The segment at 1033 to 1146 is disordered; the sequence is LTKVTEALDD…DDEDKAKTVL (114 aa). The segment covering 1041-1060 has biased composition (basic and acidic residues); that stretch reads DDAKGKTQKRELPYKKETSV. Positions 1049–1065 match the Nuclear localization signal 1 motif; sequence KRELPYKKETSVPKRRR. Polar residues predominate over residues 1094-1110; the sequence is SVMSARQRSAAESSKIS. Positions 1153–1170 match the Nuclear localization signal 2 motif; the sequence is FGKKKLKLKSMKRRKKKT.

This sequence belongs to the XPG/RAD2 endonuclease family. XPG subfamily. In terms of assembly, monomer. Homodimer. Component of the homologous recombination repair (HR) complex composed of ERCC5/XPG, BRCA2, PALB2, DSS1 and RAD51. Within the complex, interacts with BRCA2 and PALB2. Interacts with RNA polymerase II. Interacts (via C-terminus) with ERCC6/CSB; the interaction stimulates ERCC6/CSB binding to the DNA repair bubble and ERCC6/CSB ATPase activity. May form a complex composed of RNA polymerase II, ERCC6/CSB and ERCC5/XPG which associates with the DNA repair bubble during transcription-coupled nucleotide excision repair. Interacts with BRCA1; the interaction promotes the release of BRCA1 from DNA. Interacts with PCNA. Interacts with NTHL1; the interaction stimulates NTHL1 activity and NTHL1 binding to its DNA substrate. The cofactor is Mg(2+).

Its subcellular location is the nucleus. It localises to the chromosome. Single-stranded structure-specific DNA endonuclease involved in DNA excision repair. Makes the 3'incision in DNA nucleotide excision repair (NER). Binds and bends DNA repair bubble substrate and breaks base stacking at the single-strand/double-strand DNA junction of the DNA bubble. Plays a role in base excision repair (BER) by promoting the binding of DNA glycosylase NTHL1 to its substrate and increasing NTHL1 catalytic activity that removes oxidized pyrimidines from DNA. Involved in transcription-coupled nucleotide excision repair (TCR) which allows RNA polymerase II-blocking lesions to be rapidly removed from the transcribed strand of active genes. Functions during the initial step of TCR in cooperation with ERCC6/CSB to recognized stalled RNA polymerase II. Also, stimulates ERCC6/CSB binding to the DNA repair bubble and ERCC6/CSB ATPase activity. Required for DNA replication fork maintenance and preservation of genomic stability. Involved in homologous recombination repair (HRR) induced by DNA replication stress by recruiting RAD51, BRCA2, and PALB2 to the damaged DNA site. During HRR, binds to the replication fork with high specificity and stabilizes it. Also, acts upstream of HRR, to promote the release of BRCA1 from DNA. The chain is DNA excision repair protein ERCC-5 (Ercc5) from Mus musculus (Mouse).